A 303-amino-acid polypeptide reads, in one-letter code: MASKDWYKLNFQIESDLEEIIIWKLNELGIFSFSFEYLIKTENKKEVNIWLPINEWDESSRSDFEKIICKLLNINDSINKFFDWSVIKEEDWLTSWKKYWAPELVGNHFLILPCWINLNEEFNDKQIIKIDPGAAFGTGSHPSTYLCLEKMEKILLSDKKVLDIGSGSGILSIAARLLGAKEVCAIDNDYLAINSTNSNFQLNFGNLNNLNTYLGSFNEVILKHQLKKIDFVVCNILAEVIKEMIPNIYKCLRNNGEVIFSGILNSQKDEIIKILIQNNLKLLDVSSRKDWACIYAQKAKNLT.

S-adenosyl-L-methionine-binding residues include Thr-144, Gly-165, Asp-187, and Asn-235.

Belongs to the methyltransferase superfamily. PrmA family.

The protein localises to the cytoplasm. It catalyses the reaction L-lysyl-[protein] + 3 S-adenosyl-L-methionine = N(6),N(6),N(6)-trimethyl-L-lysyl-[protein] + 3 S-adenosyl-L-homocysteine + 3 H(+). Methylates ribosomal protein L11. The chain is Ribosomal protein L11 methyltransferase from Prochlorococcus marinus (strain MIT 9312).